Here is a 139-residue protein sequence, read N- to C-terminus: uncharacterized protein (139 aa).

Residues 22-38 (SVMSVCFMTMSATVLPI) traverse the membrane as a helical segment.

It localises to the membrane. This is an uncharacterized protein from Saccharomyces cerevisiae (strain ATCC 204508 / S288c) (Baker's yeast).